We begin with the raw amino-acid sequence, 321 residues long: Lipoyl synthase (321 aa).

Cys68, Cys73, Cys79, Cys94, Cys98, Cys101, and Ser308 together coordinate [4Fe-4S] cluster. Positions 80–297 (FNHGTATFMI…KVIAEDLGFS (218 aa)) constitute a Radical SAM core domain.

It belongs to the radical SAM superfamily. Lipoyl synthase family. Requires [4Fe-4S] cluster as cofactor.

Its subcellular location is the cytoplasm. It catalyses the reaction [[Fe-S] cluster scaffold protein carrying a second [4Fe-4S](2+) cluster] + N(6)-octanoyl-L-lysyl-[protein] + 2 oxidized [2Fe-2S]-[ferredoxin] + 2 S-adenosyl-L-methionine + 4 H(+) = [[Fe-S] cluster scaffold protein] + N(6)-[(R)-dihydrolipoyl]-L-lysyl-[protein] + 4 Fe(3+) + 2 hydrogen sulfide + 2 5'-deoxyadenosine + 2 L-methionine + 2 reduced [2Fe-2S]-[ferredoxin]. It participates in protein modification; protein lipoylation via endogenous pathway; protein N(6)-(lipoyl)lysine from octanoyl-[acyl-carrier-protein]: step 2/2. Functionally, catalyzes the radical-mediated insertion of two sulfur atoms into the C-6 and C-8 positions of the octanoyl moiety bound to the lipoyl domains of lipoate-dependent enzymes, thereby converting the octanoylated domains into lipoylated derivatives. This chain is Lipoyl synthase, found in Shewanella amazonensis (strain ATCC BAA-1098 / SB2B).